Consider the following 99-residue polypeptide: Aspartyl/glutamyl-tRNA(Asn/Gln) amidotransferase subunit C (99 aa).

Belongs to the GatC family. In terms of assembly, heterotrimer of A, B and C subunits.

The catalysed reaction is L-glutamyl-tRNA(Gln) + L-glutamine + ATP + H2O = L-glutaminyl-tRNA(Gln) + L-glutamate + ADP + phosphate + H(+). It catalyses the reaction L-aspartyl-tRNA(Asn) + L-glutamine + ATP + H2O = L-asparaginyl-tRNA(Asn) + L-glutamate + ADP + phosphate + 2 H(+). Its function is as follows. Allows the formation of correctly charged Asn-tRNA(Asn) or Gln-tRNA(Gln) through the transamidation of misacylated Asp-tRNA(Asn) or Glu-tRNA(Gln) in organisms which lack either or both of asparaginyl-tRNA or glutaminyl-tRNA synthetases. The reaction takes place in the presence of glutamine and ATP through an activated phospho-Asp-tRNA(Asn) or phospho-Glu-tRNA(Gln). The protein is Aspartyl/glutamyl-tRNA(Asn/Gln) amidotransferase subunit C of Burkholderia cenocepacia (strain ATCC BAA-245 / DSM 16553 / LMG 16656 / NCTC 13227 / J2315 / CF5610) (Burkholderia cepacia (strain J2315)).